A 156-amino-acid chain; its full sequence is Small ribosomal subunit protein uS7c (156 aa).

This sequence belongs to the universal ribosomal protein uS7 family. Part of the 30S ribosomal subunit.

Its subcellular location is the plastid. The protein resides in the chloroplast. One of the primary rRNA binding proteins, it binds directly to 16S rRNA where it nucleates assembly of the head domain of the 30S subunit. The sequence is that of Small ribosomal subunit protein uS7c (rps7) from Tupiella akineta (Green alga).